A 348-amino-acid polypeptide reads, in one-letter code: Beta-hexosaminidase (348 aa).

Substrate-binding positions include D64, R72, R138, and K168 to H169. The active-site Proton donor/acceptor is H181. The active-site Nucleophile is the D252.

The protein belongs to the glycosyl hydrolase 3 family. NagZ subfamily.

The protein resides in the cytoplasm. It catalyses the reaction Hydrolysis of terminal non-reducing N-acetyl-D-hexosamine residues in N-acetyl-beta-D-hexosaminides.. The protein operates within cell wall biogenesis; peptidoglycan recycling. Functionally, plays a role in peptidoglycan recycling by cleaving the terminal beta-1,4-linked N-acetylglucosamine (GlcNAc) from peptide-linked peptidoglycan fragments, giving rise to free GlcNAc, anhydro-N-acetylmuramic acid and anhydro-N-acetylmuramic acid-linked peptides. The sequence is that of Beta-hexosaminidase from Alkalilimnicola ehrlichii (strain ATCC BAA-1101 / DSM 17681 / MLHE-1).